The primary structure comprises 353 residues: Inactive ubiquitin thioesterase OTULINL (353 aa).

The segment at 1–80 is required for membrane binding; the sequence is MEAPRSAPRE…KWWIGYLQRK (80 aa). One can recognise an OTU domain in the interval 125-353; that stretch reads KCVRAVKRDN…NGHHYHIPVF (229 aa).

The protein belongs to the peptidase C65 family. Otulin subfamily. In terms of assembly, does not bind ubiquitin or ubiquitin-like proteins.

It localises to the cytoplasm. Its subcellular location is the endoplasmic reticulum membrane. It is found in the nucleus envelope. Its function is as follows. Lacks deubiquitinase activity. This Mus musculus (Mouse) protein is Inactive ubiquitin thioesterase OTULINL.